The chain runs to 533 residues: CTP synthase (533 aa).

An amidoligase domain region spans residues M1 to I269. A CTP-binding site is contributed by S16. Residue S16 coordinates UTP. ATP-binding positions include G17 to V22 and D73. Mg(2+) contacts are provided by D73 and E143. CTP contacts are provided by residues D150–E152, K190–Q195, and K226. UTP is bound by residues K190 to Q195 and K226. Residues Y304–I533 enclose the Glutamine amidotransferase type-1 domain. Residue G355 participates in L-glutamine binding. The Nucleophile; for glutamine hydrolysis role is filled by C382. L-glutamine is bound by residues L383–Q386, E406, and R466. Residues H511 and E513 contribute to the active site.

This sequence belongs to the CTP synthase family. As to quaternary structure, homotetramer.

It catalyses the reaction UTP + L-glutamine + ATP + H2O = CTP + L-glutamate + ADP + phosphate + 2 H(+). The catalysed reaction is L-glutamine + H2O = L-glutamate + NH4(+). It carries out the reaction UTP + NH4(+) + ATP = CTP + ADP + phosphate + 2 H(+). It functions in the pathway pyrimidine metabolism; CTP biosynthesis via de novo pathway; CTP from UDP: step 2/2. Its activity is regulated as follows. Allosterically activated by GTP, when glutamine is the substrate; GTP has no effect on the reaction when ammonia is the substrate. The allosteric effector GTP functions by stabilizing the protein conformation that binds the tetrahedral intermediate(s) formed during glutamine hydrolysis. Inhibited by the product CTP, via allosteric rather than competitive inhibition. Its function is as follows. Catalyzes the ATP-dependent amination of UTP to CTP with either L-glutamine or ammonia as the source of nitrogen. Regulates intracellular CTP levels through interactions with the four ribonucleotide triphosphates. This Borreliella afzelii (strain PKo) (Borrelia afzelii) protein is CTP synthase.